The sequence spans 299 residues: Protease HtpX homolog (299 aa).

2 consecutive transmembrane segments (helical) span residues I15–F35 and G39–F59. A Zn(2+)-binding site is contributed by H143. The active site involves E144. Residue H147 participates in Zn(2+) binding. 2 consecutive transmembrane segments (helical) span residues I158–W178 and I198–V218. Position 227 (E227) interacts with Zn(2+).

The protein belongs to the peptidase M48B family. Requires Zn(2+) as cofactor.

It is found in the cell membrane. In Streptococcus pneumoniae (strain Taiwan19F-14), this protein is Protease HtpX homolog.